We begin with the raw amino-acid sequence, 311 residues long: Dihydroorotate dehydrogenase B (NAD(+)), catalytic subunit (311 aa).

FMN is bound by residues serine 24 and 48–49 (KA). Substrate is bound by residues lysine 48 and 72-76 (NAIGL). 2 residues coordinate FMN: asparagine 104 and asparagine 132. Asparagine 132 contacts substrate. Cysteine 135 (nucleophile) is an active-site residue. Residues lysine 170 and isoleucine 196 each coordinate FMN. 197-198 (NT) contacts substrate. FMN-binding positions include glycine 222, 248–249 (GG), and 270–271 (GT).

Belongs to the dihydroorotate dehydrogenase family. Type 1 subfamily. As to quaternary structure, heterotetramer of 2 PyrK and 2 PyrD type B subunits. It depends on FMN as a cofactor.

Its subcellular location is the cytoplasm. The enzyme catalyses (S)-dihydroorotate + NAD(+) = orotate + NADH + H(+). The protein operates within pyrimidine metabolism; UMP biosynthesis via de novo pathway; orotate from (S)-dihydroorotate (NAD(+) route): step 1/1. Its function is as follows. Catalyzes the conversion of dihydroorotate to orotate with NAD(+) as electron acceptor. The protein is Dihydroorotate dehydrogenase B (NAD(+)), catalytic subunit (pyrDB) of Lactococcus lactis subsp. lactis (strain IL1403) (Streptococcus lactis).